The following is a 1228-amino-acid chain: Reverse gyrase (1228 aa).

The RG N-terminal-type zinc finger occupies 1–41 (MEVPLVAYLHSCPNCGGPITSDRLASGLPCRECLPDGAKAG). Residues Cys-12, Cys-15, Cys-30, and Cys-33 each contribute to the Zn(2+) site. ATP-binding positions include Gln-88 and 105–112 (APTGSGKT). One can recognise a Helicase ATP-binding domain in the interval 92-255 (ARRFVRGKSF…NLTKQLRKAE (164 aa)). Positions 211 to 214 (DDVD) match the DEAD box motif. The segment at 631-1228 (DLMRTILMVV…RKEVLPHLAS (598 aa)) is topoisomerase I. Residues 635 to 809 (TILMVVESPT…DIRRVEFHEV (175 aa)) form the Toprim domain. The Mg(2+) site is built by Glu-641 and Asp-778. The Topo IA-type catalytic domain maps to 825–1223 (NFSLVKAQIV…LYDEFRKEVL (399 aa)). The active-site O-(5'-phospho-DNA)-tyrosine intermediate is Tyr-967.

It in the N-terminal section; belongs to the DEAD box helicase family. DDVD subfamily. In the C-terminal section; belongs to the type IA topoisomerase family. As to quaternary structure, monomer. It depends on Zn(2+) as a cofactor. Mg(2+) is required as a cofactor.

The protein localises to the cytoplasm. The enzyme catalyses ATP + H2O = ADP + phosphate + H(+). Its function is as follows. Modifies the topological state of DNA by introducing positive supercoils in an ATP-dependent process, increasing the linking number in steps of +1. Binds to single-stranded DNA, transiently cleaves and then rejoins the ends, introducing a positive supercoil in the process. The scissile phosphodiester is attacked by the catalytic tyrosine of the enzyme, resulting in the formation of a DNA-(5'-phosphotyrosyl)-enzyme intermediate. Probably involved in rewinding DNA strands in regions of the chromosome that have opened up to allow replication, transcription, DNA repair and/or for DNA protection. This chain is Reverse gyrase, found in Pyrobaculum aerophilum (strain ATCC 51768 / DSM 7523 / JCM 9630 / CIP 104966 / NBRC 100827 / IM2).